A 201-amino-acid chain; its full sequence is UPF0301 protein R00917 (201 aa).

This sequence belongs to the UPF0301 (AlgH) family.

The protein is UPF0301 protein R00917 of Rhizobium meliloti (strain 1021) (Ensifer meliloti).